We begin with the raw amino-acid sequence, 907 residues long: Potassium channel AKT3 (907 aa).

Residues 1 to 75 (MPTTKCAVPL…YDRRYELWNN (75 aa)) lie on the Cytoplasmic side of the membrane. A helical membrane pass occupies residues 76 to 96 (YLILLVVYSAWVTPFEFGFVP). Topologically, residues 97–102 (EPAGAL) are extracellular. The chain crosses the membrane as a helical span at residues 103–123 (AAADNAVNAFFAVDIVLTFFV). At 124-146 (AYTDPKTFLLQDDPRKIALRYIT) the chain is on the cytoplasmic side. Residues 147–167 (TWFVLDVVATIPTELARRILP) form a helical membrane-spanning segment. Residues 168 to 174 (PDLRSYG) are Extracellular-facing. Residues 175–195 (FFGILRLWRLHRVGILFARLE) form a helical; Voltage-sensor membrane-spanning segment. The Cytoplasmic portion of the chain corresponds to 196 to 209 (KDRKFSYFWVRCVK). A helical membrane pass occupies residues 210-230 (LVCVTLFAVHCSACFYYLLAD). Residues 231–257 (RYPDPTNTWISAYMPNFHKASIWSRYV) lie on the Extracellular side of the membrane. An intramembrane region (pore-forming) is located at residues 258-277 (ASMYWSITTLSTVGYGDMHA). Topologically, residues 278-288 (ENTGEMVFTTT) are extracellular. Residues 289–309 (YMLFNLGLTAYIIGNMTNLVV) traverse the membrane as a helical segment. The Cytoplasmic portion of the chain corresponds to 310–907 (HGTSRTRKFR…VPPENRSRNQ (598 aa)). 388 to 512 (LFEGVSNDLI…TIVMNNLIQY (125 aa)) is a binding site for a nucleoside 3',5'-cyclic phosphate. 5 ANK repeats span residues 539-568 (DFPI…DPNE), 572-601 (YGRT…DSNS), 605-634 (EGRV…DLSG), 636-665 (DAAP…DVSG), and 670-699 (DGTT…DADA). Disordered stretches follow at residues 726-779 (ATRH…TPQR) and 801-824 (GGYR…SSPP). The span at 754 to 776 (SSPSSSSRRGRTSSTSAASARST) shows a compositional bias: low complexity. Gly residues predominate over residues 803–812 (YRGGGGGGGA). The KHA domain occupies 827 to 907 (RVAISCPESR…VPPENRSRNQ (81 aa)).

The protein belongs to the potassium channel family. Plant (TC 1.A.1.4) subfamily.

The protein localises to the membrane. Functionally, probable inward-rectifying potassium channel. Assuming opened or closed conformations in response to the voltage difference across the membrane, the channel is activated by hyperpolarization. The polypeptide is Potassium channel AKT3 (Oryza sativa subsp. japonica (Rice)).